Here is a 155-residue protein sequence, read N- to C-terminus: Ribosomal RNA large subunit methyltransferase H (155 aa).

S-adenosyl-L-methionine contacts are provided by residues Leu72, Gly103, and 122 to 127 (LSDLTL).

It belongs to the RNA methyltransferase RlmH family. As to quaternary structure, homodimer.

It localises to the cytoplasm. It catalyses the reaction pseudouridine(1915) in 23S rRNA + S-adenosyl-L-methionine = N(3)-methylpseudouridine(1915) in 23S rRNA + S-adenosyl-L-homocysteine + H(+). In terms of biological role, specifically methylates the pseudouridine at position 1915 (m3Psi1915) in 23S rRNA. In Acidovorax sp. (strain JS42), this protein is Ribosomal RNA large subunit methyltransferase H.